Reading from the N-terminus, the 322-residue chain is HPr kinase/phosphorylase (322 aa).

Catalysis depends on residues His146 and Lys167. 161 to 168 (GDSGLGKS) lines the ATP pocket. Ser168 contacts Mg(2+). The active-site Proton acceptor; for phosphorylation activity. Proton donor; for dephosphorylation activity is Asp185. Positions 209-218 (LEVRGLGLLD) are important for the catalytic mechanism of both phosphorylation and dephosphorylation. Position 210 (Glu210) interacts with Mg(2+). Arg250 is a catalytic residue. Residues 271–276 (QVAAGR) are important for the catalytic mechanism of dephosphorylation.

This sequence belongs to the HPrK/P family. In terms of assembly, homohexamer. Mg(2+) is required as a cofactor.

The catalysed reaction is [HPr protein]-L-serine + ATP = [HPr protein]-O-phospho-L-serine + ADP + H(+). It catalyses the reaction [HPr protein]-O-phospho-L-serine + phosphate + H(+) = [HPr protein]-L-serine + diphosphate. Functionally, catalyzes the ATP- as well as the pyrophosphate-dependent phosphorylation of a specific serine residue in HPr, a phosphocarrier protein of the phosphoenolpyruvate-dependent sugar phosphotransferase system (PTS). HprK/P also catalyzes the pyrophosphate-producing, inorganic phosphate-dependent dephosphorylation (phosphorolysis) of seryl-phosphorylated HPr (P-Ser-HPr). The polypeptide is HPr kinase/phosphorylase (Burkholderia multivorans (strain ATCC 17616 / 249)).